The following is a 285-amino-acid chain: MARLQAFKDPSFHSLVATFRSLPLIRRFVLGLILLLICQQLAVLTWRFLLPEDSRIVGVSVTPAQAKEKPATPGDFTLFGHAPDADASTVNDAALSGDIPLTSLNISLTGVLASGDAKRSIAIIAKDSQQYSRNVGDAIPGYEAKIVTISADRVVLQYQGRYEALHLYQEEEATGAPSSSGAFNQVKDEIQKDPFSAQDYLTISPVTEEEVLKGYQLNPGKNPDLFYRAGLQDNDLAVSLNGMDLRDADQAQQAMAQLAGMSKFNLTVERDGQQQDIYLALDGDH.

The Cytoplasmic segment spans residues 1-27 (MARLQAFKDPSFHSLVATFRSLPLIRR). Residues 28 to 48 (FVLGLILLLICQQLAVLTWRF) form a helical membrane-spanning segment. At 49–285 (LLPEDSRIVG…DIYLALDGDH (237 aa)) the chain is on the periplasmic side.

This sequence belongs to the GSP C family.

It localises to the cell inner membrane. Involved in a type II secretion system (T2SS, formerly general secretion pathway, GSP) for the export of proteins. Required for the translocation of the multiple pectic enzymes. The polypeptide is Type II secretion system protein C (outC) (Pectobacterium carotovorum subsp. carotovorum (Erwinia carotovora subsp. carotovora)).